The primary structure comprises 287 residues: 2-dehydro-3-deoxyphosphooctonate aldolase (287 aa).

The protein belongs to the KdsA family.

The protein resides in the cytoplasm. It catalyses the reaction D-arabinose 5-phosphate + phosphoenolpyruvate + H2O = 3-deoxy-alpha-D-manno-2-octulosonate-8-phosphate + phosphate. It participates in carbohydrate biosynthesis; 3-deoxy-D-manno-octulosonate biosynthesis; 3-deoxy-D-manno-octulosonate from D-ribulose 5-phosphate: step 2/3. The protein operates within bacterial outer membrane biogenesis; lipopolysaccharide biosynthesis. In Rhodopseudomonas palustris (strain HaA2), this protein is 2-dehydro-3-deoxyphosphooctonate aldolase.